We begin with the raw amino-acid sequence, 141 residues long: Large ribosomal subunit protein uL11 (141 aa).

Belongs to the universal ribosomal protein uL11 family. Part of the ribosomal stalk of the 50S ribosomal subunit. Interacts with L10 and the large rRNA to form the base of the stalk. L10 forms an elongated spine to which L12 dimers bind in a sequential fashion forming a multimeric L10(L12)X complex. In terms of processing, one or more lysine residues are methylated.

Functionally, forms part of the ribosomal stalk which helps the ribosome interact with GTP-bound translation factors. This is Large ribosomal subunit protein uL11 from Streptococcus equi subsp. equi (strain 4047).